The sequence spans 366 residues: MTVRNIASICNMGTNASALEKDIGPEQFPINEHYFGLVNFGNTCYCNSVLQALYFCRPFRENVLAYKAQQKKKENLLTCLADLFHSIATQKKKVGVIPPKKFISRLRKENDLFDNYMQQDAHEFLNYLLNTIADILQEEKKQEKQNGKLKNGNMNEPAENNKPELTWVHEIFQGTLTNETRCLNCETVSSKDEDFLDLSVDVEQNTSITHCLRDFSNTETLCSEQKYYCETCCSKQEAQKRMRVKKLPMILALHLKRFKYMEQLHRYTKLSYRVVFPLELRLFNTSSDAVNLDRMYDLVAVVVHCGSGPNRGHYITIVKSHGFWLLFDDDIVEKIDAQAIEEFYGLTSDISKNSESGYILFYQSRE.

Residues 35–365 (FGLVNFGNTC…SGYILFYQSR (331 aa)) enclose the USP domain. C44 functions as the Nucleophile in the catalytic mechanism. C182, C185, C229, and C232 together coordinate Zn(2+). The active-site Proton acceptor is the H313.

Belongs to the peptidase C19 family. USP12/USP46 subfamily. Interacts with WDR48. Interacts with WDR20. Interacts with DMWD. Component of the USP46/WDR20/WDR48 deubiquitinating complex. In terms of tissue distribution, broadly expressed.

Its subcellular location is the cytoplasm. It carries out the reaction Thiol-dependent hydrolysis of ester, thioester, amide, peptide and isopeptide bonds formed by the C-terminal Gly of ubiquitin (a 76-residue protein attached to proteins as an intracellular targeting signal).. Its activity is regulated as follows. Activated by interaction with WDR48. Its function is as follows. Deubiquitinating enzyme that plays a role in behavior, possibly by regulating GABA action. May act by mediating the deubiquitination of GAD1/GAD67. Has almost no deubiquitinating activity by itself and requires the interaction with WDR48 to have a high activity. Not involved in deubiquitination of monoubiquitinated FANCD2. The chain is Ubiquitin carboxyl-terminal hydrolase 46 (USP46) from Homo sapiens (Human).